The sequence spans 138 residues: Basic phospholipase A2 BP-III (138 aa).

The signal sequence occupies residues 1 to 16 (MRTLWIMAVLLVGVDG). 7 disulfide bridges follow: cysteine 42/cysteine 132, cysteine 44/cysteine 60, cysteine 59/cysteine 112, cysteine 65/cysteine 138, cysteine 66/cysteine 105, cysteine 73/cysteine 98, and cysteine 91/cysteine 103. Glycine 45 and glycine 47 together coordinate Ca(2+). The active site involves histidine 63. Residue aspartate 106 is part of the active site.

This sequence belongs to the phospholipase A2 family. Group II subfamily. K49 sub-subfamily. It depends on Ca(2+) as a cofactor. Expressed by the venom gland.

The protein localises to the secreted. It carries out the reaction a 1,2-diacyl-sn-glycero-3-phosphocholine + H2O = a 1-acyl-sn-glycero-3-phosphocholine + a fatty acid + H(+). Snake venom phospholipase A2 (PLA2) that has low phospholipase A2 activity. Shows anticoagulant activities, strong myolytic activity, infiltration of polymorphonuclear cells, and edema in stromal tissues. Induces cell death of Jurkat cells in a concentration dependent manner. PLA2 catalyzes the calcium-dependent hydrolysis of the 2-acyl groups in 3-sn-phosphoglycerides. The polypeptide is Basic phospholipase A2 BP-III (Protobothrops flavoviridis (Habu)).